Consider the following 393-residue polypeptide: Ribonuclease D (393 aa).

The 3'-5' exonuclease domain maps to 14-181; that stretch reads LITTTEDLTG…VYQLLLERLE (168 aa). The region spanning 219–300 is the HRDC domain; the sequence is NRRMLGVLRA…AAARALPDGA (82 aa).

This sequence belongs to the RNase D family. It depends on a divalent metal cation as a cofactor.

It is found in the cytoplasm. The catalysed reaction is Exonucleolytic cleavage that removes extra residues from the 3'-terminus of tRNA to produce 5'-mononucleotides.. Exonuclease involved in the 3' processing of various precursor tRNAs. Initiates hydrolysis at the 3'-terminus of an RNA molecule and releases 5'-mononucleotides. This Gluconacetobacter diazotrophicus (strain ATCC 49037 / DSM 5601 / CCUG 37298 / CIP 103539 / LMG 7603 / PAl5) protein is Ribonuclease D.